Here is a 329-residue protein sequence, read N- to C-terminus: Biotin synthase (329 aa).

Residues 48–278 (FVGDKVYLCS…SKKISVCGGR (231 aa)) form the Radical SAM core domain. 3 residues coordinate [4Fe-4S] cluster: cysteine 66, cysteine 70, and cysteine 73. Residues serine 143 and cysteine 203 each coordinate [2Fe-2S] cluster.

Belongs to the radical SAM superfamily. Biotin synthase family. As to quaternary structure, homodimer. [4Fe-4S] cluster is required as a cofactor. [2Fe-2S] cluster serves as cofactor.

It catalyses the reaction (4R,5S)-dethiobiotin + (sulfur carrier)-SH + 2 reduced [2Fe-2S]-[ferredoxin] + 2 S-adenosyl-L-methionine = (sulfur carrier)-H + biotin + 2 5'-deoxyadenosine + 2 L-methionine + 2 oxidized [2Fe-2S]-[ferredoxin]. The protein operates within cofactor biosynthesis; biotin biosynthesis; biotin from 7,8-diaminononanoate: step 2/2. In terms of biological role, catalyzes the conversion of dethiobiotin (DTB) to biotin by the insertion of a sulfur atom into dethiobiotin via a radical-based mechanism. The protein is Biotin synthase of Geotalea uraniireducens (strain Rf4) (Geobacter uraniireducens).